A 145-amino-acid polypeptide reads, in one-letter code: Succinate dehydrogenase assembly factor 2, mitochondrial (145 aa).

Belongs to the SDHAF2 family. Interacts with the flavoprotein subunit within the SDH catalytic dimer.

It localises to the mitochondrion matrix. Functionally, plays an essential role in the assembly of succinate dehydrogenase (SDH), an enzyme complex (also referred to as respiratory complex II) that is a component of both the tricarboxylic acid (TCA) cycle and the mitochondrial electron transport chain, and which couples the oxidation of succinate to fumarate with the reduction of ubiquinone (coenzyme Q) to ubiquinol. Required for flavinylation (covalent attachment of FAD) of the flavoprotein subunit of the SDH catalytic dimer. This Yarrowia lipolytica (strain CLIB 122 / E 150) (Yeast) protein is Succinate dehydrogenase assembly factor 2, mitochondrial.